The primary structure comprises 371 residues: Phosphate acyltransferase (371 aa).

Belongs to the PlsX family. In terms of assembly, homodimer. Probably interacts with PlsY.

The protein resides in the cytoplasm. The enzyme catalyses a fatty acyl-[ACP] + phosphate = an acyl phosphate + holo-[ACP]. Its pathway is lipid metabolism; phospholipid metabolism. In terms of biological role, catalyzes the reversible formation of acyl-phosphate (acyl-PO(4)) from acyl-[acyl-carrier-protein] (acyl-ACP). This enzyme utilizes acyl-ACP as fatty acyl donor, but not acyl-CoA. In Polaromonas sp. (strain JS666 / ATCC BAA-500), this protein is Phosphate acyltransferase.